Reading from the N-terminus, the 336-residue chain is DNA repair protein Rad51 homolog (336 aa).

The span at 1 to 10 (MEKLTNVQAQ) shows a compositional bias: polar residues. Residues 1 to 20 (MEKLTNVQAQQEEEEEEGPL) form a disordered region. Residue 124 to 131 (GEFRCGKT) participates in ATP binding.

Belongs to the RecA family. RAD51 subfamily. In terms of assembly, interacts with Rrp6; the interaction is required for the recruitment of spn-A to the DNA-damage response foci. In terms of tissue distribution, highly expressed in ovaries.

It localises to the nucleus. The protein localises to the cytoplasm. Its function is as follows. Plays an important role in homologous strand exchange, a key step in DNA repair through homologous recombination (HR). Binds to single and double-stranded DNA and exhibits DNA-dependent ATPase activity. Underwinds duplex DNA. Spindle genes are required for each of the symmetry-breaking steps that generate polarity during egg axis formation; oocyte positioning at the posterior of the cyst to generate the first AP polarity and inhibition of gurken (grk) signaling to the follicle cell layer to polarize first the AP axis and then DV axis. May have a role in female meiosis. In Drosophila melanogaster (Fruit fly), this protein is DNA repair protein Rad51 homolog (spn-A).